Here is a 187-residue protein sequence, read N- to C-terminus: Choriogonadotropin subunit beta variant 1 (187 aa).

The N-terminal stretch at 1–50 (MSTFPVLAEDIPLRERHVKGRVDPHFRAPKMEMFQRLLLLLLLSMGGTWA) is a signal peptide. 6 disulfide bridges follow: Cys-59-Cys-107, Cys-73-Cys-122, Cys-76-Cys-160, Cys-84-Cys-138, Cys-88-Cys-140, and Cys-143-Cys-150. N-linked (GlcNAc...) asparagine glycosylation is found at Asn-63 and Asn-80. The segment at 161–187 (DDPRFQDSSSSKAPPPSLPSPSRLPGP) is disordered. Residues 173–187 (APPPSLPSPSRLPGP) are compositionally biased toward pro residues.

The protein belongs to the glycoprotein hormones subunit beta family. Expressed in placenta, testis and pituitary.

Its subcellular location is the secreted. The protein is Choriogonadotropin subunit beta variant 1 (CGB1) of Homo sapiens (Human).